An 892-amino-acid polypeptide reads, in one-letter code: Polyribonucleotide nucleotidyltransferase (892 aa).

The segment at 407–427 (YMHNYEMPPYSTGETGRVGSP) is disordered. 2 residues coordinate Mg(2+): Asp521 and Asp527. In terms of domain architecture, KH spans 587–646 (PRIITTTVPVDKIGEVIGPKGKMINQIQEDTGAEIAIEDDGTVYISSEGGEAAEKAKEII). The 73-residue stretch at 658-730 (GETYNGKVVK…DRGKISLAIP (73 aa)) folds into the S1 motif domain. The disordered stretch occupies residues 727–892 (LAIPGFEDQE…VRRDFDPFED (166 aa)). Composition is skewed to basic and acidic residues over residues 739 to 844 (APRR…DRRS) and 851 to 877 (RRDD…ERSE).

It belongs to the polyribonucleotide nucleotidyltransferase family. Mg(2+) is required as a cofactor.

The protein localises to the cytoplasm. It catalyses the reaction RNA(n+1) + phosphate = RNA(n) + a ribonucleoside 5'-diphosphate. Involved in mRNA degradation. Catalyzes the phosphorolysis of single-stranded polyribonucleotides processively in the 3'- to 5'-direction. In Bifidobacterium adolescentis (strain ATCC 15703 / DSM 20083 / NCTC 11814 / E194a), this protein is Polyribonucleotide nucleotidyltransferase.